The sequence spans 433 residues: O-methyltransferase hasC (433 aa).

Residues E265 and 293-295 each bind S-adenosyl-L-methionine; that span reads GDF. The active-site Proton acceptor is H313. The tract at residues 413–433 is disordered; that stretch reads SPRANGNGNSAGGLEWESELM.

This sequence belongs to the class I-like SAM-binding methyltransferase superfamily. Cation-independent O-methyltransferase family. COMT subfamily.

It participates in secondary metabolite biosynthesis. In terms of biological role, O-methyltransferase; part of the gene cluster that mediates the biosynthesis of hexadehydro-astechrome (HAS), a tryptophan-derived iron(III)-complex that acts as a virulence factor in infected mice. Within the pathway, hasC, with the cytochrome P450 monooxygenase hasH and the FAD-linked oxidoreductase hasG, convert the hasE-prenylated Trp-Ala-dipeptide into an O-methylated diketopiperazine that is then released from the hasD NRPS. The HAS biosynthesis begins with the synthesis of a tethered Trp-Ala dipeptide by the NRPS hasD. The 7-dimethylallyltryptophan synthase hasE then catalyzes the prenylation of the hasD-tethered tryptophan or the resulting tethered Trp-Ala dipeptide at the C-7 position of the indole moiety. HAS biosynthesis continues via tethered intermediates with the succesive actions of the cytochrome P450 monooxygenase hasH, the O-methyltransferase hasC, and the FAD-linked oxidoreductase hasG. The resulting O-methylated diketopiperazine is then released from hasD. Finally, three O-methylated diketopiperazine molecules assemble in a trimeric complex with Fe(III) to produce hexadehydro-astechrome. The sequence is that of O-methyltransferase hasC from Aspergillus fumigatus (strain CBS 144.89 / FGSC A1163 / CEA10) (Neosartorya fumigata).